The sequence spans 105 residues: uncharacterized protein (105 aa).

A disordered region spans residues 58 to 105 (YRKKKPNHSRDNPRINSNLSTNYAQAKSVERSRSNSLNSGPNPLENAT). Polar residues-rich tracts occupy residues 71–82 (RINSNLSTNYAQ) and 91–105 (SNSL…ENAT).

It localises to the mitochondrion. This is an uncharacterized protein from Arabidopsis thaliana (Mouse-ear cress).